A 314-amino-acid chain; its full sequence is Homoserine O-acetyltransferase (314 aa).

The Acyl-thioester intermediate role is filled by C142. The substrate site is built by K163 and S192. H235 acts as the Proton acceptor in catalysis. E237 is an active-site residue. Residue R249 coordinates substrate.

This sequence belongs to the MetA family.

The protein resides in the cytoplasm. The enzyme catalyses L-homoserine + acetyl-CoA = O-acetyl-L-homoserine + CoA. It functions in the pathway amino-acid biosynthesis; L-methionine biosynthesis via de novo pathway; O-acetyl-L-homoserine from L-homoserine: step 1/1. Transfers an acetyl group from acetyl-CoA to L-homoserine, forming acetyl-L-homoserine. The sequence is that of Homoserine O-acetyltransferase from Streptococcus pneumoniae (strain Taiwan19F-14).